The following is a 549-amino-acid chain: Chaperonin GroEL 1 (549 aa).

ATP-binding positions include 30 to 33, Lys51, 87 to 91, Gly415, 479 to 481, and Asp495; these read TLGP, DGTTT, and NAA.

It belongs to the chaperonin (HSP60) family. As to quaternary structure, forms a cylinder of 14 subunits composed of two heptameric rings stacked back-to-back. Interacts with the co-chaperonin GroES.

The protein resides in the cytoplasm. It catalyses the reaction ATP + H2O + a folded polypeptide = ADP + phosphate + an unfolded polypeptide.. Together with its co-chaperonin GroES, plays an essential role in assisting protein folding. The GroEL-GroES system forms a nano-cage that allows encapsulation of the non-native substrate proteins and provides a physical environment optimized to promote and accelerate protein folding. In Azoarcus sp. (strain BH72), this protein is Chaperonin GroEL 1.